Here is a 483-residue protein sequence, read N- to C-terminus: MTVTAEKTDKSASSETSGRVVRVTGPVVDVEFPRGSVPELFNALHAKIDFGSLAKTLTLEVAQHLGDSLVRTISLQPTDGLVRGTEVTDTGRPISVPVGESVKGHVFNALGDCLDEPGYGEDFEHWSIHRKPPAFEDLEPRTEMLETGLKVVDLLTPYVRGGKIALFGGAGVGKTVLIQEMINRIARNFGGTSVFAGVGERTREGNDLWVELQEANVLKDTALVFGQMDEPPGTRMRVALSALTMAEWFRDEAGQDVLLFIDNIFRFTQAGSEVSTLLGRMPSAVGYQPTLADEMGELQERITSTRGRSITSMQAVYVPADDYTDPAPATTFAHLDATTELSRAVFSKGIFPAVDPLASSSTILDPGVVGDEHYRVAQEVIRILQRYKDLQDIIAILGIDELSEEDKQLVNRARRIERFLSQNMMAAEQFTGQPGSTVPVKETIEAFDRLCKGEFDHVPEQAFFLIGGLDDLAKKAESLGAKL.

168-175 (GGAGVGKT) provides a ligand contact to ATP.

This sequence belongs to the ATPase alpha/beta chains family. In terms of assembly, F-type ATPases have 2 components, CF(1) - the catalytic core - and CF(0) - the membrane proton channel. CF(1) has five subunits: alpha(3), beta(3), gamma(1), delta(1), epsilon(1). CF(0) has three main subunits: a(1), b(2) and c(9-12). The alpha and beta chains form an alternating ring which encloses part of the gamma chain. CF(1) is attached to CF(0) by a central stalk formed by the gamma and epsilon chains, while a peripheral stalk is formed by the delta and b chains.

The protein localises to the cell membrane. The catalysed reaction is ATP + H2O + 4 H(+)(in) = ADP + phosphate + 5 H(+)(out). In terms of biological role, produces ATP from ADP in the presence of a proton gradient across the membrane. The catalytic sites are hosted primarily by the beta subunits. In Mycobacterium ulcerans (strain Agy99), this protein is ATP synthase subunit beta.